Here is a 77-residue protein sequence, read N- to C-terminus: Acyl carrier protein (77 aa).

Residues 2 to 77 (SSIDKRIKEI…DAIDYITDHT (76 aa)) form the Carrier domain. Ser-37 is subject to O-(pantetheine 4'-phosphoryl)serine.

The protein belongs to the acyl carrier protein (ACP) family. Post-translationally, 4'-phosphopantetheine is transferred from CoA to a specific serine of apo-ACP by AcpS. This modification is essential for activity because fatty acids are bound in thioester linkage to the sulfhydryl of the prosthetic group.

The protein resides in the cytoplasm. Its pathway is lipid metabolism; fatty acid biosynthesis. In terms of biological role, carrier of the growing fatty acid chain in fatty acid biosynthesis. The sequence is that of Acyl carrier protein from Geotalea daltonii (strain DSM 22248 / JCM 15807 / FRC-32) (Geobacter daltonii).